A 479-amino-acid chain; its full sequence is Poly(A) polymerase catalytic subunit (479 aa).

Catalysis depends on residues Asp202 and Asp204. Residues Asp202, Asp204, and Asp253 each contribute to the Ca(2+) site.

Belongs to the poxviridae poly(A) polymerase catalytic subunit family. In terms of assembly, heterodimer of a large (catalytic) subunit and a small (regulatory) subunit.

It carries out the reaction RNA(n) + ATP = RNA(n)-3'-adenine ribonucleotide + diphosphate. Polymerase that creates the 3'-poly(A) tail of mRNA's. The protein is Poly(A) polymerase catalytic subunit (OPG063) of Homo sapiens (Human).